The primary structure comprises 316 residues: Peroxisomal targeting signal 2 receptor (316 aa).

WD repeat units follow at residues 56-96 (DTRD…GGRP), 102-142 (EHTK…SLKT), 145-185 (EHRY…SLNT), 188-228 (AHDH…RPTT), 232-272 (GHTY…DPII), and 277-316 (HHTE…GQFR).

The protein belongs to the WD repeat peroxin-7 family. As to quaternary structure, interacts with PEX5; interaction only takes place when PEX7 is associated with cargo proteins.

Its subcellular location is the cytoplasm. The protein resides in the cytosol. The protein localises to the peroxisome matrix. In terms of biological role, receptor required for the peroxisomal import of proteins containing a C-terminal PTS2-type peroxisomal targeting signal. Specifically binds to cargo proteins containing a PTS2 peroxisomal targeting signal in the cytosol. Cargo protein-binding triggers interaction with PEX5 and formation of a ternary complex composed of PEX5 and PEX7 along with PTS2-containing cargo proteins, which is tranlocated into peroxisomes by passing through the PEX13-PEX14 docking complex. This chain is Peroxisomal targeting signal 2 receptor (pex7), found in Dictyostelium discoideum (Social amoeba).